A 43-amino-acid polypeptide reads, in one-letter code: Defensin (43 aa).

Disulfide bonds link cysteine 3–cysteine 34, cysteine 20–cysteine 39, and cysteine 24–cysteine 41.

It is found in the secreted. Its function is as follows. Antibacterial peptide. Affects Gram-negative bacteria including methicillin-resistant Staphylococcus aureus. In Trypoxylus dichotomus (Japanese rhinoceros beetle), this protein is Defensin.